The following is a 100-amino-acid chain: Urease subunit gamma (100 aa).

It belongs to the urease gamma subunit family. Heterotrimer of UreA (gamma), UreB (beta) and UreC (alpha) subunits. Three heterotrimers associate to form the active enzyme.

Its subcellular location is the cytoplasm. It catalyses the reaction urea + 2 H2O + H(+) = hydrogencarbonate + 2 NH4(+). It participates in nitrogen metabolism; urea degradation; CO(2) and NH(3) from urea (urease route): step 1/1. The sequence is that of Urease subunit gamma from Ralstonia nicotianae (strain ATCC BAA-1114 / GMI1000) (Ralstonia solanacearum).